The chain runs to 402 residues: Caspase-1 (402 aa).

Positions Met1 to Ser91 constitute a CARD domain. Residues Met1 to Gln118 constitute a propeptide that is removed on maturation. The disordered stretch occupies residues Phe98–Phe125. Basic and acidic residues predominate over residues Glu113–Gly123. Catalysis depends on residues His236 and Cys284. Positions Ser297 to Asp314 are excised as a propeptide. Position 301 is a phosphoserine (Ser301). At Arg343 the chain carries Omega-N-methylarginine.

The protein belongs to the peptidase C14A family. As to quaternary structure, heterotetramer that consists of two anti-parallel arranged heterodimers, each one formed by a 20 kDa (Caspase-1 subunit p20) and a 10 kDa (Caspase-1 subunit p10) subunit. May be a component of the inflammasome, a protein complex which also includes PYCARD, CARD8 and NLRP2 and whose function would be the activation of pro-inflammatory caspases. Component of the AIM2 PANoptosome complex, a multiprotein complex that drives inflammatory cell death (PANoptosis). Both the p10 and p20 subunits interact with MEFV. Interacts with CARD17P/INCA and CARD18. Interacts with SERPINB1; this interaction regulates CASP1 activity. In terms of assembly, heterotetramer that consists of two anti-parallel arranged heterodimers, each one formed by a 20 kDa (Caspase-1 subunit p20) and a 10 kDa (Caspase-1 subunit p10) subunit. Post-translationally, the two subunits are derived from the precursor sequence by an autocatalytic mechanism. Ubiquitinated via 'Lys-11'-linked polyubiquitination. Deubiquitinated by USP8. As to expression, high level expression seen in spleen and lung, low level expression seen in brain, heart, liver, kidney, testis and skeletal muscle.

It is found in the cytoplasm. The protein localises to the cell membrane. It carries out the reaction Strict requirement for an Asp residue at position P1 and has a preferred cleavage sequence of Tyr-Val-Ala-Asp-|-.. Its function is as follows. Thiol protease involved in a variety of inflammatory processes by proteolytically cleaving other proteins, such as the precursors of the inflammatory cytokines interleukin-1 beta (IL1B) and interleukin 18 (IL18) as well as the pyroptosis inducer Gasdermin-D (GSDMD), into active mature peptides. Plays a key role in cell immunity as an inflammatory response initiator: once activated through formation of an inflammasome complex, it initiates a pro-inflammatory response through the cleavage of the two inflammatory cytokines IL1B and IL18, releasing the mature cytokines which are involved in a variety of inflammatory processes. Cleaves a tetrapeptide after an Asp residue at position P1. Also initiates pyroptosis, a programmed lytic cell death pathway, through cleavage of GSDMD. In contrast to cleavage of interleukin IL1B, recognition and cleavage of GSDMD is not strictly dependent on the consensus cleavage site but depends on an exosite interface on CASP1 that recognizes and binds the Gasdermin-D, C-terminal (GSDMD-CT) part. Cleaves and activates CASP7 in response to bacterial infection, promoting plasma membrane repair. Upon inflammasome activation, during DNA virus infection but not RNA virus challenge, controls antiviral immunity through the cleavage of CGAS, rendering it inactive. In apoptotic cells, cleaves SPHK2 which is released from cells and remains enzymatically active extracellularly. This is Caspase-1 (Casp1) from Mus musculus (Mouse).